Consider the following 371-residue polypeptide: tRNA-specific 2-thiouridylase MnmA (371 aa).

ATP contacts are provided by residues 24 to 31 (AMSGGVDS) and Leu50. The active-site Nucleophile is the Cys119. A disulfide bridge links Cys119 with Cys215. An ATP-binding site is contributed by Gly143. The segment at 165-167 (KDQ) is interaction with tRNA. Catalysis depends on Cys215, which acts as the Cysteine persulfide intermediate.

The protein belongs to the MnmA/TRMU family.

It localises to the cytoplasm. The enzyme catalyses S-sulfanyl-L-cysteinyl-[protein] + uridine(34) in tRNA + AH2 + ATP = 2-thiouridine(34) in tRNA + L-cysteinyl-[protein] + A + AMP + diphosphate + H(+). In terms of biological role, catalyzes the 2-thiolation of uridine at the wobble position (U34) of tRNA, leading to the formation of s(2)U34. The chain is tRNA-specific 2-thiouridylase MnmA from Neorickettsia sennetsu (strain ATCC VR-367 / Miyayama) (Ehrlichia sennetsu).